The following is a 525-amino-acid chain: GMP synthase [glutamine-hydrolyzing] (525 aa).

The 199-residue stretch at 9–207 (RILILDFGSQ…VLDICQCEAL (199 aa)) folds into the Glutamine amidotransferase type-1 domain. Cysteine 86 (nucleophile) is an active-site residue. Catalysis depends on residues histidine 181 and glutamate 183. The region spanning 208–400 (WTPATIIEDA…LGLPYDMLFR (193 aa)) is the GMPS ATP-PPase domain. ATP is bound at residue 235-241 (SGGVDSS).

In terms of assembly, homodimer.

It carries out the reaction XMP + L-glutamine + ATP + H2O = GMP + L-glutamate + AMP + diphosphate + 2 H(+). It functions in the pathway purine metabolism; GMP biosynthesis; GMP from XMP (L-Gln route): step 1/1. Catalyzes the synthesis of GMP from XMP. The sequence is that of GMP synthase [glutamine-hydrolyzing] from Serratia proteamaculans (strain 568).